Consider the following 157-residue polypeptide: uncharacterized protein (157 aa).

Disordered regions lie at residues 76-105 (AINQELHLTPHKKTSPATSSSLKPRPGPRG) and 132-157 (VRAPSTKPSKTSSSNNPWPLTPRMRG). Residues 135–148 (PSTKPSKTSSSNNP) show a composition bias toward low complexity.

To M.pneumoniae MPN_091 and MPN_413.

This is an uncharacterized protein from Mycoplasma pneumoniae (strain ATCC 29342 / M129 / Subtype 1) (Mycoplasmoides pneumoniae).